Here is a 658-residue protein sequence, read N- to C-terminus: Threonine--tRNA ligase (658 aa).

The TGS domain maps to methionine 1–threonine 61. The tract at residues aspartate 243–proline 535 is catalytic. Positions 335, 386, and 512 each coordinate Zn(2+).

Belongs to the class-II aminoacyl-tRNA synthetase family. Homodimer. It depends on Zn(2+) as a cofactor.

It is found in the cytoplasm. It catalyses the reaction tRNA(Thr) + L-threonine + ATP = L-threonyl-tRNA(Thr) + AMP + diphosphate + H(+). Functionally, catalyzes the attachment of threonine to tRNA(Thr) in a two-step reaction: L-threonine is first activated by ATP to form Thr-AMP and then transferred to the acceptor end of tRNA(Thr). Also edits incorrectly charged L-seryl-tRNA(Thr). This Phenylobacterium zucineum (strain HLK1) protein is Threonine--tRNA ligase.